Reading from the N-terminus, the 433-residue chain is Oxaloacetate decarboxylase beta chain 2 (433 aa).

Helical transmembrane passes span Leu-16–Ala-36, Leu-42–Ala-62, Val-122–Met-142, Phe-168–Phe-188, Leu-190–Leu-210, Pro-216–Ile-236, Ile-266–Leu-286, Asn-311–Ala-331, Leu-340–Met-360, and Val-413–Met-433.

Belongs to the GcdB/MmdB/OadB family. As to quaternary structure, heterotrimer of an alpha, a beta and a gamma subunit. It depends on Na(+) as a cofactor.

It is found in the cell membrane. The catalysed reaction is oxaloacetate + 2 Na(+)(in) + H(+) = pyruvate + 2 Na(+)(out) + CO2. In terms of biological role, catalyzes the decarboxylation of oxaloacetate coupled to Na(+) translocation. The chain is Oxaloacetate decarboxylase beta chain 2 (oadB2) from Salmonella typhi.